A 446-amino-acid polypeptide reads, in one-letter code: Putative zinc metalloprotease NMA0084 (446 aa).

Residue H18 participates in Zn(2+) binding. E19 is an active-site residue. H22 is a binding site for Zn(2+). Helical transmembrane passes span 93–115 (IAIV…GLSF), 376–398 (FLAL…LDGG), and 419–438 (NIGL…VAFF). Residues 100 to 181 (PLTNLALAVL…KVAVGVQTAS (82 aa)) form the PDZ domain.

This sequence belongs to the peptidase M50B family. Zn(2+) serves as cofactor.

The protein localises to the cell inner membrane. This Neisseria meningitidis serogroup A / serotype 4A (strain DSM 15465 / Z2491) protein is Putative zinc metalloprotease NMA0084.